A 396-amino-acid polypeptide reads, in one-letter code: Bifunctional enzyme Fae/Hps (396 aa).

The segment at 1 to 161 (MMLIGEALIG…HEKDRAAHAV (161 aa)) is formaldehyde-activating enzyme. Histidine 17 acts as the Proton donor in catalysis. Residues aspartate 19, leucine 48, lysine 66, threonine 68, and glutamine 83 each coordinate substrate. The interval 162 to 396 (MGFKISKLWD…IDQFRIMTDF (235 aa)) is 3-hexulose-6-phosphate synthase.

In the N-terminal section; belongs to the formaldehyde-activating enzyme family. The protein in the C-terminal section; belongs to the HPS/KGPDC family. HPS subfamily.

It catalyses the reaction 5,6,7,8-tetrahydromethanopterin + formaldehyde = 5,10-methylenetetrahydromethanopterin + H2O. It carries out the reaction D-ribulose 5-phosphate + formaldehyde = D-arabino-hex-3-ulose 6-phosphate. It functions in the pathway carbohydrate biosynthesis; D-ribose 5-phosphate biosynthesis. In terms of biological role, catalyzes the condensation of formaldehyde with tetrahydromethanopterin (H(4)MPT) to 5,10-methylenetetrahydromethanopterin. Functionally, catalyzes the reversible formation of ribulose-5-phosphate and formaldehyde from 3-hexulose-6-phosphate. This Methanococcoides burtonii (strain DSM 6242 / NBRC 107633 / OCM 468 / ACE-M) protein is Bifunctional enzyme Fae/Hps.